Consider the following 394-residue polypeptide: Elongation factor Tu (394 aa).

In terms of domain architecture, tr-type G spans 10 to 204 (KPHVNVGTIG…HLDTYIPEPE (195 aa)). The interval 19–26 (GHVDHGKT) is G1. Residue 19-26 (GHVDHGKT) coordinates GTP. Position 26 (threonine 26) interacts with Mg(2+). The G2 stretch occupies residues 60–64 (GITIN). Residues 81–84 (DCPG) are G3. Residues 81 to 85 (DCPGH) and 136 to 139 (NKCD) each bind GTP. Residues 136-139 (NKCD) are G4. The tract at residues 174-176 (SAL) is G5.

This sequence belongs to the TRAFAC class translation factor GTPase superfamily. Classic translation factor GTPase family. EF-Tu/EF-1A subfamily. In terms of assembly, monomer.

It localises to the cytoplasm. The catalysed reaction is GTP + H2O = GDP + phosphate + H(+). In terms of biological role, GTP hydrolase that promotes the GTP-dependent binding of aminoacyl-tRNA to the A-site of ribosomes during protein biosynthesis. This chain is Elongation factor Tu, found in Aeromonas hydrophila subsp. hydrophila (strain ATCC 7966 / DSM 30187 / BCRC 13018 / CCUG 14551 / JCM 1027 / KCTC 2358 / NCIMB 9240 / NCTC 8049).